Here is a 430-residue protein sequence, read N- to C-terminus: MKRMKLRTNAGPLQGTIQVPGDKSISHRAVILGAVAKGETRVKGLLKGEDVLSTIQAFRNLGVRIEEKDDQLVIEGQGFQGLTAPCQTLNMGNSGTSMRLIAGLLAGQPFSVKMIGDESLSKRPMDRIVYPLKQMGVEISGETDRQFPPLQLQGNRNLQPITYTLPISSAQVKSAILLAALQAKGTTQVVEKEITRNHTEEMIQQFGGRLIVDGKRITLVGPQQLTAQEITVPGDISSAAFWLVAGLIIPGSELLLKNVGVNPTRTGILEVVEKMGAQIVYEDMNKKEQVTSIRVVYSHLKGTIISGGLIPRLIDELPIIALLATQAQGTTCIKDAQELRVKETDRIQVVTDTLNSMGANIKATADGMIIKGPTVLYGANTSTYGDHRIGMMTAIAALLVKQGQVHLDKEEAIMTSYPTFFKDLERLCHD.

The 3-phosphoshikimate site is built by Lys23, Ser24, and Arg28. Lys23 contacts phosphoenolpyruvate. Gly95 and Arg123 together coordinate phosphoenolpyruvate. 3-phosphoshikimate-binding residues include Ser169, Gln171, Asp315, and Lys342. Gln171 provides a ligand contact to phosphoenolpyruvate. Asp315 (proton acceptor) is an active-site residue. The phosphoenolpyruvate site is built by Arg346 and Arg388.

Belongs to the EPSP synthase family. In terms of assembly, monomer.

It is found in the cytoplasm. The catalysed reaction is 3-phosphoshikimate + phosphoenolpyruvate = 5-O-(1-carboxyvinyl)-3-phosphoshikimate + phosphate. It participates in metabolic intermediate biosynthesis; chorismate biosynthesis; chorismate from D-erythrose 4-phosphate and phosphoenolpyruvate: step 6/7. Functionally, catalyzes the transfer of the enolpyruvyl moiety of phosphoenolpyruvate (PEP) to the 5-hydroxyl of shikimate-3-phosphate (S3P) to produce enolpyruvyl shikimate-3-phosphate and inorganic phosphate. The protein is 3-phosphoshikimate 1-carboxyvinyltransferase of Streptococcus pyogenes serotype M6 (strain ATCC BAA-946 / MGAS10394).